We begin with the raw amino-acid sequence, 411 residues long: GTPase Obg (411 aa).

The Obg domain maps to 1–157; that stretch reads MQFIDEARFV…REIRLELRVL (157 aa). The interval 20-45 is disordered; the sequence is AVSFHREKYRPRGGPDGGRGGDGGSV. Gly residues predominate over residues 33-43; the sequence is GPDGGRGGDGG. The OBG-type G domain maps to 158-330; the sequence is SDVGLVGLPN…LERSAEAAPR (173 aa). GTP-binding positions include 164–171, 189–193, 212–215, 276–279, and 311–313; these read GLPNAGKS, FTTLT, DIPG, NKVD, and ARL. Mg(2+)-binding residues include S171 and T191. The region spanning 335 to 411 is the OCT domain; sequence VFRPSWRGLR…RIGDVSFEFR (77 aa).

The protein belongs to the TRAFAC class OBG-HflX-like GTPase superfamily. OBG GTPase family. As to quaternary structure, monomer. Mg(2+) is required as a cofactor.

Its subcellular location is the cytoplasm. In terms of biological role, an essential GTPase which binds GTP, GDP and possibly (p)ppGpp with moderate affinity, with high nucleotide exchange rates and a fairly low GTP hydrolysis rate. Plays a role in control of the cell cycle, stress response, ribosome biogenesis and in those bacteria that undergo differentiation, in morphogenesis control. The polypeptide is GTPase Obg (Rubrobacter xylanophilus (strain DSM 9941 / JCM 11954 / NBRC 16129 / PRD-1)).